A 555-amino-acid chain; its full sequence is Glypican-6 (555 aa).

A signal peptide spans 1 to 23; it reads MPSWIGAVILPLLGLLLSLPAGA. The span at 348–357 shows a compositional bias: low complexity; it reads PALRSARSAP. Disordered stretches follow at residues 348–376 and 480–501; these read PALR…PTTA and GNDV…GSGC. A lipid anchor (GPI-anchor amidated serine) is attached at S529. Positions 530-555 are cleaved as a propeptide — removed in mature form; that stretch reads SAAQRGHSLLSWSLTCIVLALQRLCR.

The protein belongs to the glypican family. As to expression, widely expressed. High expression in fetal kidney and lung and lower expressions in fetal liver and brain. In adult tissues, very abundant in ovary, high levels also observed in liver, kidney, small intestine and colon. Not detected in peripheral blood leukocytes. Detected in breast cancer cells (at protein level).

The protein resides in the cell membrane. It localises to the secreted. The protein localises to the extracellular space. Cell surface proteoglycan that bears heparan sulfate. Putative cell surface coreceptor for growth factors, extracellular matrix proteins, proteases and anti-proteases. Enhances migration and invasion of cancer cells through WNT5A signaling. In Homo sapiens (Human), this protein is Glypican-6 (GPC6).